The sequence spans 135 residues: MTVKLGFVVAEFNRDITYMMEIEAREHAGFLDAEVADTIYVPGAYDMPLAIKKLLERGEIDAVVTIGCVIEGATQHDEIVVQHAARKIIDLSLEFGKPVALGISGPGMTRMEATERIDYAKRAVESAVKMVQRLE.

Residues Phe-12, 44–46 (AYD), and 68–70 (CVI) each bind 5-amino-6-(D-ribitylamino)uracil. Residue 73 to 74 (AT) participates in (2S)-2-hydroxy-3-oxobutyl phosphate binding. His-76 (proton donor) is an active-site residue. Position 101 (Leu-101) interacts with 5-amino-6-(D-ribitylamino)uracil. Arg-116 contacts (2S)-2-hydroxy-3-oxobutyl phosphate.

It belongs to the DMRL synthase family.

It catalyses the reaction (2S)-2-hydroxy-3-oxobutyl phosphate + 5-amino-6-(D-ribitylamino)uracil = 6,7-dimethyl-8-(1-D-ribityl)lumazine + phosphate + 2 H2O + H(+). The protein operates within cofactor biosynthesis; riboflavin biosynthesis; riboflavin from 2-hydroxy-3-oxobutyl phosphate and 5-amino-6-(D-ribitylamino)uracil: step 1/2. Catalyzes the formation of 6,7-dimethyl-8-ribityllumazine by condensation of 5-amino-6-(D-ribitylamino)uracil with 3,4-dihydroxy-2-butanone 4-phosphate. This is the penultimate step in the biosynthesis of riboflavin. The chain is 6,7-dimethyl-8-ribityllumazine synthase from Methanoculleus marisnigri (strain ATCC 35101 / DSM 1498 / JR1).